A 482-amino-acid polypeptide reads, in one-letter code: uncharacterized protein (482 aa).

Composition is skewed to low complexity over residues 24–86 and 312–339; these read SPNS…AQQQ and TDSL…SQSI. 2 disordered regions span residues 24–88 and 307–376; these read SPNS…QQHY and LHSQ…LIGK. The segment covering 342–363 has biased composition (acidic residues); it reads EEEEDGGEDEEEEGGEDNDNES.

This is an uncharacterized protein from Dictyostelium discoideum (Social amoeba).